The following is a 146-amino-acid chain: Probable calcium-binding protein CML32 (146 aa).

EF-hand domains are found at residues 1–33 (MSVAEIFERVDKNKDGKISWDEFAEAIRAFSPS), 34–69 (ITSEEIDNMFREIDVDGDNQIDVAEYASCLMLGGEG), 73–108 (DEDIVMKEAFDLYDIDGDGKISASEIHVVLKRLGEK), and 109–144 (QTIAECIAMVRAVDADGDGFVSFEEFKTMMSCNNKK). 19 residues coordinate Ca(2+): D11, N13, D15, K17, E22, D47, D49, D51, Q53, E58, D86, D88, D90, K92, E97, D122, D124, D126, and E133.

In terms of biological role, potential calcium sensor. This is Probable calcium-binding protein CML32 (CML32) from Arabidopsis thaliana (Mouse-ear cress).